A 395-amino-acid polypeptide reads, in one-letter code: uncharacterized protein (395 aa).

Disordered stretches follow at residues 185 to 282 (RREV…SSTA) and 316 to 372 (GSST…TCSS). Basic residues predominate over residues 248–257 (LHLRTRHPHR). The segment covering 342–360 (ARASTHSRSSPSASANSRY) has biased composition (low complexity).

This is an uncharacterized protein from Streptomyces fradiae (Streptomyces roseoflavus).